A 1068-amino-acid chain; its full sequence is Phosphatidylinositol 4,5-bisphosphate 3-kinase catalytic subunit alpha isoform (1068 aa).

The 90-residue stretch at 16–105 (MPPRILVECL…QPFLKVIEPV (90 aa)) folds into the PI3K-ABD domain. The PI3K-RBD domain maps to 187–289 (KGQIIVVIWV…GRMPNLMLMA (103 aa)). One can recognise a C2 PI3K-type domain in the interval 330 to 487 (INSALRIKIL…DWFSSVVKFP (158 aa)). Residues 517 to 694 (LARDNELREN…GLLLESYCRA (178 aa)) enclose the PIK helical domain. Positions 765–1051 (RLEECRIMSS…QMNDAHHGGW (287 aa)) constitute a PI3K/PI4K catalytic domain. Positions 771–777 (IMSSAKR) are G-loop. The catalytic loop stretch occupies residues 912–920 (GIGDRHNSN). An activation loop region spans residues 931 to 957 (HIDFGHFLDHKKKKFGYKRERVPFVLT).

Belongs to the PI3/PI4-kinase family. As to quaternary structure, heterodimer of a catalytic subunit PIK3CA and a p85 regulatory subunit (PIK3R1, PIK3R2 or PIK3R3). Interacts with IRS1 in nuclear extracts. Interacts with RUFY3. Interacts with RASD2. Interacts with APPL1. Interacts with HRAS and KRAS. Interaction with HRAS/KRAS is required for PI3K pathway signaling and cell proliferation stimulated by EGF and FGF2. Interacts with FAM83B; activates the PI3K/AKT signaling cascade.

The enzyme catalyses L-seryl-[protein] + ATP = O-phospho-L-seryl-[protein] + ADP + H(+). It catalyses the reaction a 1,2-diacyl-sn-glycero-3-phospho-(1D-myo-inositol) + ATP = a 1,2-diacyl-sn-glycero-3-phospho-(1D-myo-inositol-3-phosphate) + ADP + H(+). It carries out the reaction a 1,2-diacyl-sn-glycero-3-phospho-(1D-myo-inositol-4,5-bisphosphate) + ATP = a 1,2-diacyl-sn-glycero-3-phospho-(1D-myo-inositol-3,4,5-trisphosphate) + ADP + H(+). The catalysed reaction is 1,2-dioctanoyl-sn-glycero-3-phospho-(1D-myo-inositol-4,5-bisphosphate) + ATP = 1,2-dioctanoyl-sn-glycero-3-phospho-(1D-myo-inositol-3,4,5-trisphosphate) + ADP + H(+). The enzyme catalyses 1-octadecanoyl-2-(5Z,8Z,11Z,14Z)-eicosatetraenoyl-sn-glycero-3-phospho-1D-myo-inositol 4,5-bisphosphate + ATP = 1-octadecanoyl-2-(5Z,8Z,11Z,14Z-eicosatetraenoyl)-sn-glycero-3-phospho-(1D-myo-inositol 3,4,5-triphosphate) + ADP + H(+). It functions in the pathway phospholipid metabolism; phosphatidylinositol phosphate biosynthesis. Phosphoinositide-3-kinase (PI3K) phosphorylates phosphatidylinositol (PI) and its phosphorylated derivatives at position 3 of the inositol ring to produce 3-phosphoinositides. Uses ATP and PtdIns(4,5)P2 (phosphatidylinositol 4,5-bisphosphate) to generate phosphatidylinositol 3,4,5-trisphosphate (PIP3). PIP3 plays a key role by recruiting PH domain-containing proteins to the membrane, including AKT1 and PDPK1, activating signaling cascades involved in cell growth, survival, proliferation, motility and morphology. Participates in cellular signaling in response to various growth factors. Involved in the activation of AKT1 upon stimulation by receptor tyrosine kinases ligands such as EGF, insulin, IGF1, VEGFA and PDGF. Involved in signaling via insulin-receptor substrate (IRS) proteins. Essential in endothelial cell migration during vascular development through VEGFA signaling, possibly by regulating RhoA activity. Required for lymphatic vasculature development, possibly by binding to RAS and by activation by EGF and FGF2, but not by PDGF. Regulates invadopodia formation through the PDPK1-AKT1 pathway. Participates in cardiomyogenesis in embryonic stem cells through a AKT1 pathway. Participates in vasculogenesis in embryonic stem cells through PDK1 and protein kinase C pathway. In addition to its lipid kinase activity, it displays a serine-protein kinase activity that results in the autophosphorylation of the p85alpha regulatory subunit as well as phosphorylation of other proteins such as 4EBP1, H-Ras, the IL-3 beta c receptor and possibly others. Plays a role in the positive regulation of phagocytosis and pinocytosis. In Bos taurus (Bovine), this protein is Phosphatidylinositol 4,5-bisphosphate 3-kinase catalytic subunit alpha isoform (PIK3CA).